The following is a 505-amino-acid chain: Trans-cinnamate 4-monooxygenase (505 aa).

The helical transmembrane segment at 3 to 23 (LLLLEKTLLGLFIAAITAIAI) threads the bilayer. (E)-cinnamate-binding positions include 213–218 (RSRLAQ) and Ala306. Heme is bound at residue Cys447.

This sequence belongs to the cytochrome P450 family. The cofactor is heme.

It is found in the membrane. The enzyme catalyses (E)-cinnamate + reduced [NADPH--hemoprotein reductase] + O2 = (E)-4-coumarate + oxidized [NADPH--hemoprotein reductase] + H2O + H(+). It functions in the pathway phenylpropanoid metabolism; trans-4-coumarate biosynthesis; trans-4-coumarate from trans-cinnamate: step 1/1. In terms of biological role, catalyzes the first oxidative step of the phenylpropanoid pathway in higher plants by transforming trans-cinnamate into p-coumarate. The compounds formed by this pathway are essential components for lignification, pollination, and defense against ultraviolet light, predators and pathogens. The protein is Trans-cinnamate 4-monooxygenase (CYP73A14) of Glycyrrhiza echinata (Licorice).